Reading from the N-terminus, the 525-residue chain is Peptide chain release factor 3 (525 aa).

The region spanning 9–276 is the tr-type G domain; it reads AKRRTFAIIS…GFTRYAPAPQ (268 aa). GTP-binding positions include 18 to 25, 86 to 90, and 140 to 143; these read SHPDAGKT, DTPGH, and NKFD.

It belongs to the TRAFAC class translation factor GTPase superfamily. Classic translation factor GTPase family. PrfC subfamily.

It is found in the cytoplasm. Its function is as follows. Increases the formation of ribosomal termination complexes and stimulates activities of RF-1 and RF-2. It binds guanine nucleotides and has strong preference for UGA stop codons. It may interact directly with the ribosome. The stimulation of RF-1 and RF-2 is significantly reduced by GTP and GDP, but not by GMP. In Francisella tularensis subsp. mediasiatica (strain FSC147), this protein is Peptide chain release factor 3.